The sequence spans 370 residues: Anhydro-N-acetylmuramic acid kinase (370 aa).

12–19 (GTSLDGID) provides a ligand contact to ATP.

This sequence belongs to the anhydro-N-acetylmuramic acid kinase family.

It catalyses the reaction 1,6-anhydro-N-acetyl-beta-muramate + ATP + H2O = N-acetyl-D-muramate 6-phosphate + ADP + H(+). It participates in amino-sugar metabolism; 1,6-anhydro-N-acetylmuramate degradation. Its pathway is cell wall biogenesis; peptidoglycan recycling. Its function is as follows. Catalyzes the specific phosphorylation of 1,6-anhydro-N-acetylmuramic acid (anhMurNAc) with the simultaneous cleavage of the 1,6-anhydro ring, generating MurNAc-6-P. Is required for the utilization of anhMurNAc either imported from the medium or derived from its own cell wall murein, and thus plays a role in cell wall recycling. This Yersinia enterocolitica serotype O:8 / biotype 1B (strain NCTC 13174 / 8081) protein is Anhydro-N-acetylmuramic acid kinase.